The following is a 557-amino-acid chain: MLGTLGLWTLLPAAAQVSPNRRTCVFFEAPGVRGSTKTLGEVVDAGPGPPKGIRCLYSHCCFGIWNLTHGRAQVEMQGCLDSDEPGCESLHCDPVPRAHPSPSSTLFTCSCGTDFCNANYSHLPPSGNRGAPGPQEPQATPGGPIWMAQLLLGVFLVLLLSIIILALLQRKACRVQGGSDPEPEPGSGGDCSEELPELAELRFSQVIQEGGHAVVWAGRLQGEMVAIKAFPPRAVAQFRAERAVYQLLGLQHNHIVRFITAGQGGPGPLPSGPLLVLELYPKGSLCHYLTQYTSDWGSSLRMALSLAEGLAFLHGERWQDGQYKPGIAHRDLSSQNVLIREDRSCAIGDLGLALVLPGLAQPPALAPTQPRGPAAILEAGTQRYMAPELLDKTLDLQDWGTALQRADVYSLALLLWEILSRCSDLRPDHRPPPFQLAYEAELGSNPSACELWALAVAERKRPNIPSSWSCSATDPRGLRELLEDCWDADPEARLTAECVQQRLAALAYPQVASSFPESCPQGCPENCPAAPASAAFPCRPQQSSCLLSVQQGSGSKS.

Positions methionine 1 to valine 17 are cleaved as a signal peptide. Topologically, residues serine 18–proline 144 are extracellular. 2 cysteine pairs are disulfide-bonded: cysteine 55-cysteine 79 and cysteine 92-cysteine 109. Asparagine 66 carries N-linked (GlcNAc...) asparagine glycosylation. A glycan (N-linked (GlcNAc...) asparagine) is linked at asparagine 119. The helical transmembrane segment at isoleucine 145–leucine 165 threads the bilayer. At alanine 166–serine 557 the chain is on the cytoplasmic side. In terms of domain architecture, Protein kinase spans leucine 201–valine 511. ATP contacts are provided by residues isoleucine 207–valine 215 and lysine 228. Aspartate 331 serves as the catalytic Proton acceptor.

Belongs to the protein kinase superfamily. TKL Ser/Thr protein kinase family. TGFB receptor subfamily. Interacts with type I receptor ACVR1. The cofactor is Mg(2+). It depends on Mn(2+) as a cofactor.

Its subcellular location is the membrane. The catalysed reaction is L-threonyl-[receptor-protein] + ATP = O-phospho-L-threonyl-[receptor-protein] + ADP + H(+). It carries out the reaction L-seryl-[receptor-protein] + ATP = O-phospho-L-seryl-[receptor-protein] + ADP + H(+). In terms of biological role, on ligand binding, forms a receptor complex consisting of two type II and two type I transmembrane serine/threonine kinases. Type II receptors phosphorylate and activate type I receptors which autophosphorylate, then bind and activate SMAD transcriptional regulators. Receptor for anti-Muellerian hormone. In Rattus norvegicus (Rat), this protein is Anti-Muellerian hormone type-2 receptor (Amhr2).